The sequence spans 480 residues: Ribosomal protein uS12 methylthiotransferase RimO (480 aa).

The 122-residue stretch at 14–135 (LSVAMVTLGC…IAARLRSIVA (122 aa)) folds into the MTTase N-terminal domain. 6 residues coordinate [4Fe-4S] cluster: Cys-23, Cys-59, Cys-98, Cys-193, Cys-197, and Cys-200. Residues 179–410 (LDDGPTAALK…DLVEELTSQR (232 aa)) enclose the Radical SAM core domain. The TRAM domain occupies 412–480 (AERLGEQVEV…EGADLDARPL (69 aa)).

This sequence belongs to the methylthiotransferase family. RimO subfamily. The cofactor is [4Fe-4S] cluster.

It localises to the cytoplasm. The catalysed reaction is L-aspartate(89)-[ribosomal protein uS12]-hydrogen + (sulfur carrier)-SH + AH2 + 2 S-adenosyl-L-methionine = 3-methylsulfanyl-L-aspartate(89)-[ribosomal protein uS12]-hydrogen + (sulfur carrier)-H + 5'-deoxyadenosine + L-methionine + A + S-adenosyl-L-homocysteine + 2 H(+). Catalyzes the methylthiolation of an aspartic acid residue of ribosomal protein uS12. The chain is Ribosomal protein uS12 methylthiotransferase RimO from Nocardioides sp. (strain ATCC BAA-499 / JS614).